We begin with the raw amino-acid sequence, 274 residues long: MERGEGRRGDCSVQVRKKRTRRKSDGPDSIAETIKWWKEQNQKLQEENSSRKAPAKGSKKGCMAGKGGPENSNCAYRGVRQRTWGKWVAEIREPNRGRRLWLGSFPTALEAAHAYDEAARAMYGPTARVNFADNSTDANSGCTSAPSLMMSNGPATIPSDEKDELESPPFIVANGPAVLYQPDKKDVLERVVPEVQDVKTEGSNGLKRVCQERKNMEVCESEGIVLHKEVNISYDYFNVHEVVEMIIVELSADQKTEVHEEYQEGDDGFSLFSY.

Composition is skewed to basic and acidic residues over residues 1–10 (MERGEGRRGD) and 35–50 (KWWK…ENSS). Residues 1 to 75 (MERGEGRRGD…KGGPENSNCA (75 aa)) are disordered. The AP2/ERF DNA-binding region spans 75–132 (AYRGVRQRTWGKWVAEIREPNRGRRLWLGSFPTALEAAHAYDEAARAMYGPTARVNFA).

Belongs to the AP2/ERF transcription factor family. ERF subfamily.

The protein localises to the nucleus. Functionally, transcriptional activator that binds specifically to the DNA sequence 5'-[AG]CCGAC-3' of the cis-acting dehydration-responsive element (DRE). Binding to the C-repeat/DRE element mediates high salinity- and dehydration-inducible transcription. The chain is Dehydration-responsive element-binding protein 2A (DREB2A) from Oryza sativa subsp. japonica (Rice).